The chain runs to 442 residues: D-serine dehydratase (442 aa).

Lysine 118 is subject to N6-(pyridoxal phosphate)lysine.

The protein belongs to the serine/threonine dehydratase family. DsdA subfamily. As to quaternary structure, monomer. Pyridoxal 5'-phosphate serves as cofactor.

It catalyses the reaction D-serine = pyruvate + NH4(+). The polypeptide is D-serine dehydratase (Shigella flexneri).